We begin with the raw amino-acid sequence, 300 residues long: Ribonuclease HIII (300 aa).

Residues 86–300 (RSRIGVDESG…FNEVLGSGNQ (215 aa)) enclose the RNase H type-2 domain. 3 residues coordinate a divalent metal cation: Asp-92, Glu-93, and Asp-196.

It belongs to the RNase HII family. RnhC subfamily. Requires Mn(2+) as cofactor. The cofactor is Mg(2+).

Its subcellular location is the cytoplasm. The enzyme catalyses Endonucleolytic cleavage to 5'-phosphomonoester.. In terms of biological role, endonuclease that specifically degrades the RNA of RNA-DNA hybrids. This chain is Ribonuclease HIII, found in Chlamydia trachomatis serovar L2 (strain ATCC VR-902B / DSM 19102 / 434/Bu).